The primary structure comprises 294 residues: Hydroxyethylthiazole kinase (294 aa).

Substrate is bound at residue methionine 57. ATP contacts are provided by arginine 132 and serine 196. Glycine 223 contributes to the substrate binding site.

Belongs to the Thz kinase family. Requires Mg(2+) as cofactor.

The enzyme catalyses 5-(2-hydroxyethyl)-4-methylthiazole + ATP = 4-methyl-5-(2-phosphooxyethyl)-thiazole + ADP + H(+). It functions in the pathway cofactor biosynthesis; thiamine diphosphate biosynthesis; 4-methyl-5-(2-phosphoethyl)-thiazole from 5-(2-hydroxyethyl)-4-methylthiazole: step 1/1. In terms of biological role, catalyzes the phosphorylation of the hydroxyl group of 4-methyl-5-beta-hydroxyethylthiazole (THZ). The chain is Hydroxyethylthiazole kinase from Bifidobacterium adolescentis (strain ATCC 15703 / DSM 20083 / NCTC 11814 / E194a).